Consider the following 240-residue polypeptide: MGRIFETRKATMFARWNKMAKAFTRISKDIAIAVKGGGPNPDNNPALRRVLQNARHLNMPKDKVEAAIKRASGQDQQAYEVVVYEGYAPHGVAVMVETATDNVVRTVANVRMHFKNNGGNMGNTGSVAFQFRRMGVFRLAPEGIDQDALELDLIDHGLEEMGESTGEKGEKLLVIRCAFESFGQLQAALEERKLNVLSAESEYVAQTPVQLGEEQAREVLELVDALEQDEDVQHVFHNLA.

The protein belongs to the TACO1 family.

It localises to the cytoplasm. This is Probable transcriptional regulatory protein A2cp1_1765 from Anaeromyxobacter dehalogenans (strain 2CP-1 / ATCC BAA-258).